The following is a 476-amino-acid chain: WD repeat, SAM and U-box domain-containing protein 1 (476 aa).

7 WD repeats span residues 10 to 47 (DHSDDVNCCAFSSSCLATCSLDKTIRIYSLNDFTELPY), 52 to 91 (GHTYAVHCCCFSPSGHTLASCSTDGATIIWDTSDGRMLAV), 95 to 134 (PTGSPVRVCRFSPESTYLVSGAADGSVVLWNVHSMKFYRS), 137 to 176 (VKDGSLVACAFSPGGNFFVTGSSCGDLTVWDDKMRCLCNE), 178 to 227 (AHDL…FLGG), 237 to 276 (GHSAPVLTCAFSYDGQMLVSGSVDKCVIIYETNTGNILHT), and 279 to 318 (QHTRYVTTCAFAPCSLFLATGSMDKTVHIWKLDNKQPCAG). Positions 333-396 (WSEDDVSAWL…LQKIEELRMK (64 aa)) constitute an SAM domain. A U-box domain is found at 403-476 (AVPDEFLCPI…ISRWLETQQK (74 aa)).

This chain is WD repeat, SAM and U-box domain-containing protein 1 (WDSUB1), found in Gallus gallus (Chicken).